A 144-amino-acid polypeptide reads, in one-letter code: Large ribosomal subunit protein uL15 (144 aa).

Residues 1–52 are disordered; the sequence is MRLNSLSPAEGAKHSAKRLGRGISSGLGKTGGRGHKGQKSRTGGGVRRGFEG.

The protein belongs to the universal ribosomal protein uL15 family. Part of the 50S ribosomal subunit.

Functionally, binds to the 23S rRNA. This is Large ribosomal subunit protein uL15 from Actinobacillus pleuropneumoniae serotype 7 (strain AP76).